A 344-amino-acid polypeptide reads, in one-letter code: 4-hydroxy-2-oxovalerate aldolase (344 aa).

In terms of domain architecture, Pyruvate carboxyltransferase spans 8–260; it reads VTLHDMSLRD…NHGIDLYKIM (253 aa). Residue 16 to 17 participates in substrate binding; it reads RD. Asp-17 lines the Mn(2+) pocket. The Proton acceptor role is filled by His-20. Ser-170 and His-199 together coordinate substrate. Residues His-199 and His-201 each contribute to the Mn(2+) site. Tyr-290 lines the substrate pocket.

The protein belongs to the 4-hydroxy-2-oxovalerate aldolase family.

The enzyme catalyses (S)-4-hydroxy-2-oxopentanoate = acetaldehyde + pyruvate. The polypeptide is 4-hydroxy-2-oxovalerate aldolase (mhpE) (Pseudoalteromonas translucida (strain TAC 125)).